Here is a 612-residue protein sequence, read N- to C-terminus: Phosphopentomutase (612 aa).

An N-acetylalanine modification is found at alanine 2. Alpha-D-glucose 1,6-bisphosphate is bound by residues arginine 63 and serine 165. The Phosphoserine intermediate role is filled by serine 165. Residues serine 165, aspartate 322, aspartate 324, and aspartate 326 each contribute to the Mg(2+) site. A Phosphoserine modification is found at serine 165. Positions 326, 327, 400, 424, and 438 each coordinate alpha-D-glucose 1,6-bisphosphate.

This sequence belongs to the phosphohexose mutase family. As to quaternary structure, monomer. Requires Mg(2+) as cofactor.

It localises to the cytoplasm. The protein resides in the cytosol. It carries out the reaction alpha-D-ribose 1-phosphate = D-ribose 5-phosphate. The enzyme catalyses 2-deoxy-alpha-D-ribose 1-phosphate = 2-deoxy-D-ribose 5-phosphate. It catalyses the reaction alpha-D-glucose 1-phosphate = alpha-D-glucose 6-phosphate. The catalysed reaction is O-phospho-L-seryl-[protein] + alpha-D-glucose 1-phosphate = alpha-D-glucose 1,6-bisphosphate + L-seryl-[protein]. It carries out the reaction alpha-D-glucose 1,6-bisphosphate + L-seryl-[protein] = O-phospho-L-seryl-[protein] + alpha-D-glucose 6-phosphate. Its activity is regulated as follows. The phosphomutase activity is stimulated by glucose 1,6-bisphosphate. Functionally, catalyzes the conversion of the nucleoside breakdown products ribose-1-phosphate and deoxyribose-1-phosphate to the corresponding 5-phosphopentoses. Catalyzes the reversible isomerization of alpha-D-glucose 1-phosphate to alpha-D-glucose 6-phosphate but with a lower catalytic efficiency. The mechanism proceeds via the intermediate compound alpha-D-glucose 1,6-bisphosphate. In vitro, also has a low glucose 1,6-bisphosphate synthase activity which is most probably not physiologically relevant. The polypeptide is Phosphopentomutase (Homo sapiens (Human)).